The chain runs to 206 residues: Isochorismatase domain-containing protein 2A (206 aa).

Residue K26 is modified to N6-succinyllysine. Residues K93 and K178 each carry the N6-acetyllysine; alternate modification. Residues K93 and K178 each carry the N6-succinyllysine; alternate modification. K182 and K185 each carry N6-acetyllysine.

The protein belongs to the isochorismatase family. Interacts with CDKN2A. In terms of tissue distribution, ubiquitous. Expressed predominantly in uterus, stomach and urinary tract.

It localises to the cytoplasm. It is found in the nucleus. In Mus musculus (Mouse), this protein is Isochorismatase domain-containing protein 2A.